The sequence spans 376 residues: GDSL esterase/lipase 2 (376 aa).

The N-terminal stretch at 1–25 (MENSRSTLIIFFAYTTIILIGSINC) is a signal peptide. A glycan (N-linked (GlcNAc...) asparagine) is linked at Asn-36. The active-site Nucleophile is the Ser-46. N-linked (GlcNAc...) asparagine glycosylation is found at Asn-186 and Asn-205. Catalysis depends on residues Asp-340 and His-343. Asn-362 carries N-linked (GlcNAc...) asparagine glycosylation.

This sequence belongs to the 'GDSL' lipolytic enzyme family. As to expression, expressed seedlings, roots and stems.

It localises to the secreted. In terms of biological role, involved in the resistance to the necrotropic bacteria Erwinia carotovora, probably via negative regulation of auxin signaling. Possesses lipase and antimicrobial activities, inhibiting germination of fungal spores (e.g. Alternaria brassicicola). The polypeptide is GDSL esterase/lipase 2 (GLIP2) (Arabidopsis thaliana (Mouse-ear cress)).